Reading from the N-terminus, the 758-residue chain is Polyribonucleotide nucleotidyltransferase (758 aa).

Mg(2+) contacts are provided by Asp482 and Asp488. A KH domain is found at 549–608; sequence PRVLSFYIDKDKISAAIGTKGKNIRSVCERSNAKIEIGDDGKVSVFAISSTEAEAAKNMM. Residues 618 to 686 form the S1 motif domain; sequence GSIIDAKVVK…KGGCPKLSRR (69 aa). A disordered region spans residues 707–758; it reads DGLNNRDNYYNNSFNKKPEDNYHSNRPTRPRSGFSNRSRPKFGNNDSSSGFY. The segment covering 711–721 has biased composition (low complexity); sequence NRDNYYNNSFN.

Belongs to the polyribonucleotide nucleotidyltransferase family. Requires Mg(2+) as cofactor.

Its subcellular location is the cytoplasm. The catalysed reaction is RNA(n+1) + phosphate = RNA(n) + a ribonucleoside 5'-diphosphate. In terms of biological role, involved in mRNA degradation. Catalyzes the phosphorolysis of single-stranded polyribonucleotides processively in the 3'- to 5'-direction. The chain is Polyribonucleotide nucleotidyltransferase from Wolbachia pipientis subsp. Culex pipiens (strain wPip).